A 342-amino-acid chain; its full sequence is S-adenosylmethionine:tRNA ribosyltransferase-isomerase (342 aa).

Belongs to the QueA family. Monomer.

It is found in the cytoplasm. It carries out the reaction 7-aminomethyl-7-carbaguanosine(34) in tRNA + S-adenosyl-L-methionine = epoxyqueuosine(34) in tRNA + adenine + L-methionine + 2 H(+). Its pathway is tRNA modification; tRNA-queuosine biosynthesis. Transfers and isomerizes the ribose moiety from AdoMet to the 7-aminomethyl group of 7-deazaguanine (preQ1-tRNA) to give epoxyqueuosine (oQ-tRNA). The chain is S-adenosylmethionine:tRNA ribosyltransferase-isomerase from Geobacillus kaustophilus (strain HTA426).